The sequence spans 204 residues: MARPDKVAAVAELKEKFSSAGATVLTEYRGLSVSALKDLRRSLGSDATYAVAKNTLTRIAAKEAGIEGLDDQLVGPTALAFINGDVASVAKGLKNFAKDNPLLVIKGGVMDGNVLDADQVKKLADLESREVLLAKLAGGLKANLTKAAVVFNALPSKAARGLGALQEKAAADPSVIGGAGEASDQEPKTTETPEASAAQDNTNE.

Positions alanine 170–glutamate 204 are disordered. Positions threonine 192–glutamate 204 are enriched in polar residues.

It belongs to the universal ribosomal protein uL10 family. In terms of assembly, part of the ribosomal stalk of the 50S ribosomal subunit. The N-terminus interacts with L11 and the large rRNA to form the base of the stalk. The C-terminus forms an elongated spine to which L12 dimers bind in a sequential fashion forming a multimeric L10(L12)X complex.

In terms of biological role, forms part of the ribosomal stalk, playing a central role in the interaction of the ribosome with GTP-bound translation factors. In Cutibacterium acnes (strain DSM 16379 / KPA171202) (Propionibacterium acnes), this protein is Large ribosomal subunit protein uL10.